We begin with the raw amino-acid sequence, 329 residues long: DNA-directed RNA polymerase subunit alpha (329 aa).

The interval 1-231 is alpha N-terminal domain (alpha-NTD); that stretch reads MQTNLLKPKT…EQLAVFAQLE (231 aa). Residues 249 to 329 form an alpha C-terminal domain (alpha-CTD) region; it reads FDPILLRPVD…SWPPAGLDKR (81 aa).

Belongs to the RNA polymerase alpha chain family. In terms of assembly, homodimer. The RNAP catalytic core consists of 2 alpha, 1 beta, 1 beta' and 1 omega subunit. When a sigma factor is associated with the core the holoenzyme is formed, which can initiate transcription.

The catalysed reaction is RNA(n) + a ribonucleoside 5'-triphosphate = RNA(n+1) + diphosphate. Its function is as follows. DNA-dependent RNA polymerase catalyzes the transcription of DNA into RNA using the four ribonucleoside triphosphates as substrates. The polypeptide is DNA-directed RNA polymerase subunit alpha (Polaromonas sp. (strain JS666 / ATCC BAA-500)).